A 138-amino-acid polypeptide reads, in one-letter code: Putative pre-16S rRNA nuclease (138 aa).

Belongs to the YqgF nuclease family.

It is found in the cytoplasm. In terms of biological role, could be a nuclease involved in processing of the 5'-end of pre-16S rRNA. This chain is Putative pre-16S rRNA nuclease, found in Polaromonas sp. (strain JS666 / ATCC BAA-500).